The following is a 287-amino-acid chain: Protease HtpX homolog (287 aa).

2 consecutive transmembrane segments (helical) span residues Val4–Leu24 and Leu35–Leu53. A Zn(2+)-binding site is contributed by His139. Glu140 is a catalytic residue. His143 serves as a coordination point for Zn(2+). The next 2 helical transmembrane spans lie at Gly147–Ser167 and Ala194–Phe214. Glu219 is a binding site for Zn(2+).

Belongs to the peptidase M48B family. Requires Zn(2+) as cofactor.

It is found in the cell inner membrane. The sequence is that of Protease HtpX homolog from Desulfotalea psychrophila (strain LSv54 / DSM 12343).